The chain runs to 547 residues: Chaperonin GroEL (547 aa).

ATP contacts are provided by residues 30–33 (TLGP), Lys-51, 87–91 (DGTTT), Gly-415, 479–481 (NAA), and Asp-495.

The protein belongs to the chaperonin (HSP60) family. In terms of assembly, forms a cylinder of 14 subunits composed of two heptameric rings stacked back-to-back. Interacts with the co-chaperonin GroES.

Its subcellular location is the cytoplasm. The enzyme catalyses ATP + H2O + a folded polypeptide = ADP + phosphate + an unfolded polypeptide.. Together with its co-chaperonin GroES, plays an essential role in assisting protein folding. The GroEL-GroES system forms a nano-cage that allows encapsulation of the non-native substrate proteins and provides a physical environment optimized to promote and accelerate protein folding. This is Chaperonin GroEL from Polynucleobacter necessarius subsp. necessarius (strain STIR1).